Consider the following 99-residue polypeptide: Bublin coiled-coil protein (99 aa).

The stretch at 34–71 (LDQINSCLDDIEERNDALNGKLQELLESNRAARRDFRQ) forms a coiled coil. Residues 66-78 (RRDFRQQITDHAD) are compositionally biased toward basic and acidic residues. Positions 66–99 (RRDFRQQITDHADLPPPANDDDEDEQSRDAQKKD) are disordered.

The protein belongs to the UPF0184 (EST00098) family.

It is found in the cell junction. The protein resides in the cytoplasm. Its subcellular location is the cytoskeleton. In terms of biological role, essential for intermediate filament organization in intestinal cells, interacts with intermediate filament and regulates intestinal lumen morphology. The sequence is that of Bublin coiled-coil protein (bbln) from Danio rerio (Zebrafish).